A 286-amino-acid chain; its full sequence is Glycine--tRNA ligase alpha subunit (286 aa).

Belongs to the class-II aminoacyl-tRNA synthetase family. Tetramer of two alpha and two beta subunits.

It localises to the cytoplasm. It carries out the reaction tRNA(Gly) + glycine + ATP = glycyl-tRNA(Gly) + AMP + diphosphate. This is Glycine--tRNA ligase alpha subunit from Campylobacter lari (strain RM2100 / D67 / ATCC BAA-1060).